Consider the following 104-residue polypeptide: Large ribosomal subunit protein bL21 (104 aa).

Belongs to the bacterial ribosomal protein bL21 family. In terms of assembly, part of the 50S ribosomal subunit. Contacts protein L20.

Its function is as follows. This protein binds to 23S rRNA in the presence of protein L20. The protein is Large ribosomal subunit protein bL21 of Salinispora tropica (strain ATCC BAA-916 / DSM 44818 / JCM 13857 / NBRC 105044 / CNB-440).